We begin with the raw amino-acid sequence, 240 residues long: Lactate utilization protein C (240 aa).

This sequence belongs to the LutC/YkgG family.

Functionally, is involved in L-lactate degradation and allows cells to grow with lactate as the sole carbon source. In Bacillus licheniformis (strain ATCC 14580 / DSM 13 / JCM 2505 / CCUG 7422 / NBRC 12200 / NCIMB 9375 / NCTC 10341 / NRRL NRS-1264 / Gibson 46), this protein is Lactate utilization protein C.